The chain runs to 407 residues: uncharacterized protein (407 aa).

12 helical membrane passes run 22–42, 51–71, 101–121, 126–146, 154–174, 179–199, 227–247, 258–278, 286–306, 309–329, 347–367, and 369–389; these read IVSV…PLAV, LGFS…ATLA, ALLL…VLLV, VLGI…IGRV, VISW…PVGV, ALIP…GYYL, GLGL…ITLY, LSLT…ANTI, VAIV…LAPV, VALV…PALG, AYSV…GYVA, and AFGY…GVAL.

Belongs to the major facilitator superfamily. YhhS family.

The protein resides in the cell inner membrane. This is an uncharacterized protein from Burkholderia pseudomallei (strain 1106a).